The chain runs to 331 residues: Ferredoxin--NADP reductase (331 aa).

FAD is bound by residues T14, E33, Q41, Y46, V86, F120, D284, and S327.

Belongs to the ferredoxin--NADP reductase type 2 family. As to quaternary structure, homodimer. It depends on FAD as a cofactor.

The enzyme catalyses 2 reduced [2Fe-2S]-[ferredoxin] + NADP(+) + H(+) = 2 oxidized [2Fe-2S]-[ferredoxin] + NADPH. This Picrophilus torridus (strain ATCC 700027 / DSM 9790 / JCM 10055 / NBRC 100828 / KAW 2/3) protein is Ferredoxin--NADP reductase.